Here is a 391-residue protein sequence, read N- to C-terminus: Multidrug resistance protein MdtL (391 aa).

Over 1 to 3 (MSR) the chain is Cytoplasmic. A helical membrane pass occupies residues 4 to 24 (FLICSFALVLLYPAGIDMYLV). Over 25–41 (GLPRIAADLNASEAQLH) the chain is Periplasmic. Residues 42–62 (IAFSVYLAGMAAAMLFAGKVA) form a helical membrane-spanning segment. Residues 63 to 68 (DRSGRK) are Cytoplasmic-facing. The helical transmembrane segment at 69–89 (PVAIPGAALFIITSVFCSLAE) threads the bilayer. Over 90–92 (TST) the chain is Periplasmic. The helical transmembrane segment at 93 to 113 (LFLAGRFLQGLGAGCCYVVAF) threads the bilayer. The Cytoplasmic portion of the chain corresponds to 114–130 (AILRDTLDDRRRAKVLS). Residues 131–151 (LLNGITCIIPVLAPVLGHLIM) traverse the membrane as a helical segment. The Periplasmic portion of the chain corresponds to 152–157 (LKFPWQ). A helical transmembrane segment spans residues 158–178 (SLFWTMAIMGIAVLMLSLFIL). The Cytoplasmic portion of the chain corresponds to 179-198 (KETRPAAPAASDKSRENSES). Residues 199-221 (LLNRFFLSRVVITTLSVSVILTF) traverse the membrane as a helical segment. The Periplasmic portion of the chain corresponds to 222-244 (VNTSPVLLMEIMGFERGEYATIM). The helical transmembrane segment at 245-265 (ALTAGVSMTVSFSTPFALGIF) threads the bilayer. Topologically, residues 266-268 (KPR) are cytoplasmic. A helical membrane pass occupies residues 269 to 289 (TLMITSQVLFLAAGITLTVSP). Residues 290–292 (SHA) are Periplasmic-facing. Residues 293–313 (VSLFGITLICAGFSVGFGVAM) traverse the membrane as a helical segment. The Cytoplasmic segment spans residues 314-330 (SQALGPFSLRAGVASST). A helical transmembrane segment spans residues 331-351 (LGIAQVCGSSLWIWLAAVVGI). The Periplasmic segment spans residues 352-355 (SAWN). A helical membrane pass occupies residues 356-376 (MLIGILIACSIVSLLLIMFVA). At 377–391 (PGRPVTAHEEIHHHA) the chain is on the cytoplasmic side.

It belongs to the major facilitator superfamily. DHA1 family. MdtL (TC 2.A.1.2.22) subfamily.

The protein localises to the cell inner membrane. In terms of biological role, confers resistance to chloramphenicol. The protein is Multidrug resistance protein MdtL (mdtL) of Escherichia coli O157:H7.